Consider the following 232-residue polypeptide: Lipopolysaccharide core heptose(II) kinase WaaY (232 aa).

This sequence belongs to the protein kinase superfamily. RfaY/WaaY family.

The catalysed reaction is alpha-D-Glc-(1-&gt;3)-[L-alpha-D-Hep-(1-&gt;7)]-L-alpha-D-Hep-(1-&gt;3)-4-O-PO3(2-)-L-alpha-D-Hep-(1-&gt;5)-[alpha-Kdo-(2-&gt;4)]-alpha-Kdo-(2-&gt;6)-lipid A + ATP = alpha-D-Glc-(1-&gt;3)-[L-alpha-D-Hep-(1-&gt;7)]-4-O-PO3(2-)-L-alpha-D-Hep-(1-&gt;3)-4-O-PO3(2-)-L-alpha-D-Hep-(1-&gt;5)-[alpha-Kdo-(2-&gt;4)]-alpha-Kdo-(2-&gt;6)-lipid A + ADP + H(+). Its pathway is bacterial outer membrane biogenesis; LPS core biosynthesis. In terms of biological role, kinase involved in the biosynthesis of the core oligosaccharide region of lipopolysaccharide (LPS). Catalyzes the phosphorylation of the second heptose unit (HepII) of the inner core. The chain is Lipopolysaccharide core heptose(II) kinase WaaY from Salmonella typhimurium (strain LT2 / SGSC1412 / ATCC 700720).